We begin with the raw amino-acid sequence, 210 residues long: 3-hexulose-6-phosphate synthase (210 aa).

The protein belongs to the HPS/KGPDC family. HPS subfamily.

The enzyme catalyses D-ribulose 5-phosphate + formaldehyde = D-arabino-hex-3-ulose 6-phosphate. Its pathway is one-carbon metabolism; formaldehyde assimilation via RuMP pathway; D-fructose 6-phosphate from D-ribulose 5-phosphate and formaldehyde: step 1/2. Its function is as follows. Catalyzes the condensation of ribulose 5-phosphate with formaldehyde to form 3-hexulose 6-phosphate. This is 3-hexulose-6-phosphate synthase from Staphylococcus aureus (strain MRSA252).